The sequence spans 230 residues: Large ribosomal subunit protein uL1 (230 aa).

This sequence belongs to the universal ribosomal protein uL1 family. Part of the 50S ribosomal subunit.

Its function is as follows. Binds directly to 23S rRNA. The L1 stalk is quite mobile in the ribosome, and is involved in E site tRNA release. Protein L1 is also a translational repressor protein, it controls the translation of the L11 operon by binding to its mRNA. The protein is Large ribosomal subunit protein uL1 of Leptospira interrogans serogroup Icterohaemorrhagiae serovar copenhageni (strain Fiocruz L1-130).